A 320-amino-acid chain; its full sequence is Ferrochelatase (320 aa).

Residues histidine 194 and glutamate 275 each coordinate Fe cation.

This sequence belongs to the ferrochelatase family. As to quaternary structure, monomer.

The protein resides in the cytoplasm. The enzyme catalyses heme b + 2 H(+) = protoporphyrin IX + Fe(2+). It functions in the pathway porphyrin-containing compound metabolism; protoheme biosynthesis; protoheme from protoporphyrin-IX: step 1/1. Its function is as follows. Catalyzes the ferrous insertion into protoporphyrin IX. The chain is Ferrochelatase from Shigella sonnei (strain Ss046).